A 284-amino-acid polypeptide reads, in one-letter code: NAD kinase (284 aa).

D70 serves as the catalytic Proton acceptor. NAD(+)-binding positions include 70–71 (DG), 139–140 (NE), K167, D169, L177, 180–185 (TAYNLS), and Q236.

This sequence belongs to the NAD kinase family. It depends on a divalent metal cation as a cofactor.

The protein localises to the cytoplasm. The catalysed reaction is NAD(+) + ATP = ADP + NADP(+) + H(+). In terms of biological role, involved in the regulation of the intracellular balance of NAD and NADP, and is a key enzyme in the biosynthesis of NADP. Catalyzes specifically the phosphorylation on 2'-hydroxyl of the adenosine moiety of NAD to yield NADP. The protein is NAD kinase of Helicobacter pylori (strain J99 / ATCC 700824) (Campylobacter pylori J99).